The following is a 332-amino-acid chain: Phenol 2-monooxygenase, oxygenase component MhpL (332 aa).

Belongs to the TmoE/XamoE family.

It carries out the reaction phenol + NADH + O2 + H(+) = catechol + NAD(+) + H2O. It functions in the pathway aromatic compound metabolism; phenol degradation. Its function is as follows. Part of a multicomponent enzyme which catalyzes the degradation of phenol and some of its methylated derivatives. This chain is Phenol 2-monooxygenase, oxygenase component MhpL (mphL), found in Acinetobacter pittii (strain PHEA-2).